The following is a 168-amino-acid chain: NADH-quinone oxidoreductase subunit E 2 (168 aa).

4 residues coordinate [2Fe-2S] cluster: C77, C82, C118, and C122.

This sequence belongs to the complex I 24 kDa subunit family. [2Fe-2S] cluster serves as cofactor.

The catalysed reaction is a quinone + NADH + 5 H(+)(in) = a quinol + NAD(+) + 4 H(+)(out). Functionally, NDH-1 shuttles electrons from NADH, via FMN and iron-sulfur (Fe-S) centers, to quinones in the respiratory chain. The immediate electron acceptor for the enzyme in this species is believed to be ubiquinone. Couples the redox reaction to proton translocation (for every two electrons transferred, four hydrogen ions are translocated across the cytoplasmic membrane), and thus conserves the redox energy in a proton gradient. In Rhizobium meliloti (strain 1021) (Ensifer meliloti), this protein is NADH-quinone oxidoreductase subunit E 2 (nuoE2).